A 139-amino-acid chain; its full sequence is Ribulose bisphosphate carboxylase small subunit, plasmid (139 aa).

The protein belongs to the RuBisCO small chain family. In terms of assembly, heterohexadecamer of 8 large and 8 small subunits.

Its function is as follows. RuBisCO catalyzes two reactions: the carboxylation of D-ribulose 1,5-bisphosphate, the primary event in carbon dioxide fixation, as well as the oxidative fragmentation of the pentose substrate. Both reactions occur simultaneously and in competition at the same active site. Although the small subunit is not catalytic it is essential for maximal activity. This chain is Ribulose bisphosphate carboxylase small subunit, plasmid, found in Cupriavidus necator (strain ATCC 17699 / DSM 428 / KCTC 22496 / NCIMB 10442 / H16 / Stanier 337) (Ralstonia eutropha).